A 366-amino-acid chain; its full sequence is Isocitrate dehydrogenase [NAD] subunit alpha, mitochondrial (366 aa).

The transit peptide at 1-27 (MAGPAWISKVSRLLGAFHNPKQVTRGF) directs the protein to the mitochondrion. At K77 the chain carries N6-succinyllysine. T101 bears the Phosphothreonine mark. Substrate is bound by residues R115, R125, and R146. Residue K223 is modified to N6-acetyllysine. Residues D233, D257, and D261 each coordinate Mg(2+). Residue K343 is modified to N6-acetyllysine; alternate. Position 343 is an N6-succinyllysine; alternate (K343). The residue at position 350 (K350) is an N6-succinyllysine.

It belongs to the isocitrate and isopropylmalate dehydrogenases family. Heterooligomer of subunits alpha (IDH3A), beta (IDH3B), and gamma (IDH3G) in the apparent ratio of 2:1:1. The heterodimer containing one IDH3A and one IDH3B subunit and the heterodimer containing one IDH3A and one IDH3G subunit assemble into a heterotetramer (which contains two subunits of IDH3A, one of IDH3B and one of IDH3G) and further into the heterooctamer. Mg(2+) serves as cofactor. The cofactor is Mn(2+).

The protein localises to the mitochondrion. The catalysed reaction is D-threo-isocitrate + NAD(+) = 2-oxoglutarate + CO2 + NADH. Its activity is regulated as follows. The heterotetramer and the heterodimer composed of IDH3A and IDH3G subunits can be allosterically activated by citrate (CIT) or/and ADP, and the two activators can act independently or synergistically. The heterodimer composed of IDH3A and IDH3B subunits cannot be allosterically regulated and the allosteric regulation of the heterotetramer is through the IDH3G subunit and not the IDH3B subunit. The IDH3G subunit contains the allosteric site which consists of a CIT-binding site and an ADP-binding site, and the binding of CIT and ADP causes conformational changes at the allosteric site which are transmitted to the active site in the catalytic subunit (IDH3A) through a cascade of conformational changes at the heterodimer interface, leading to stabilization of the isocitrate-binding at the active site and thus activation of the enzyme. ATP can activate the heterotetramer and the heterodimer composed of IDH3A and IDH3G subunits at low concentrations but inhibits their activities at high concentrations, whereas ATP exhibits only inhibitory effect on the heterodimer composed of IDH3A and IDH3B subunits. Functionally, catalytic subunit of the enzyme which catalyzes the decarboxylation of isocitrate (ICT) into alpha-ketoglutarate. The heterodimer composed of the alpha (IDH3A) and beta (IDH3B) subunits and the heterodimer composed of the alpha (IDH3A) and gamma (IDH3G) subunits, have considerable basal activity but the full activity of the heterotetramer (containing two subunits of IDH3A, one of IDH3B and one of IDH3G) requires the assembly and cooperative function of both heterodimers. This is Isocitrate dehydrogenase [NAD] subunit alpha, mitochondrial from Homo sapiens (Human).